The sequence spans 126 residues: Large ribosomal subunit protein bL19 (126 aa).

This sequence belongs to the bacterial ribosomal protein bL19 family.

This protein is located at the 30S-50S ribosomal subunit interface and may play a role in the structure and function of the aminoacyl-tRNA binding site. In Bordetella bronchiseptica (strain ATCC BAA-588 / NCTC 13252 / RB50) (Alcaligenes bronchisepticus), this protein is Large ribosomal subunit protein bL19.